Here is a 351-residue protein sequence, read N- to C-terminus: Photosystem II D2 protein (351 aa).

A helical membrane pass occupies residues 39–59 (TAYLALGGWFTGTTFVTSWYT). Chlorophyll a is bound at residue His116. Residues 123–139 (GFMLRQFEIARLVGIRP) traverse the membrane as a helical segment. Pheophytin a-binding residues include Gln128 and Asn141. Residues 151-164 (VFLACFLIYPLGQH) traverse the membrane as a helical segment. His196 is a chlorophyll a binding site. The chain crosses the membrane as a helical span at residues 206–226 (GALLCGIHGATVQNTLFEDGA). The a plastoquinone site is built by His213 and Phe260. His213 is a binding site for Fe cation. His267 contacts Fe cation. The chain crosses the membrane as a helical span at residues 277 to 293 (GMWTPSVGIVGLAVNLR).

It belongs to the reaction center PufL/M/PsbA/D family. As to quaternary structure, PSII is composed of 1 copy each of membrane proteins PsbA, PsbB, PsbC, PsbD, PsbE, PsbF, PsbH, PsbI, PsbJ, PsbK, PsbL, PsbM, PsbT, PsbX, PsbY, Psb30/Ycf12, peripheral proteins PsbO, CyanoQ (PsbQ), PsbU, PsbV and a large number of cofactors. It forms dimeric complexes. The D1/D2 heterodimer binds P680, chlorophylls that are the primary electron donor of PSII, and subsequent electron acceptors. It shares a non-heme iron and each subunit binds pheophytin, quinone, additional chlorophylls, carotenoids and lipids. There is also a Cl(-1) ion associated with D1 and D2, which is required for oxygen evolution. The PSII complex binds additional chlorophylls, carotenoids and specific lipids. serves as cofactor.

It is found in the cellular thylakoid membrane. The enzyme catalyses 2 a plastoquinone + 4 hnu + 2 H2O = 2 a plastoquinol + O2. Its function is as follows. Photosystem II (PSII) is a light-driven water:plastoquinone oxidoreductase that uses light energy to abstract electrons from H(2)O, generating O(2) and a proton gradient subsequently used for ATP formation. It consists of a core antenna complex that captures photons, and an electron transfer chain that converts photonic excitation into a charge separation. The D1/D2 (PsbA/PsbD) reaction center heterodimer binds P680, the primary electron donor of PSII as well as several subsequent electron acceptors. D2 is needed for assembly of a stable PSII complex. In Prochlorococcus marinus (strain MIT 9313), this protein is Photosystem II D2 protein.